The following is a 202-amino-acid chain: Holliday junction branch migration complex subunit RuvA (202 aa).

The tract at residues 1–63 (MIEYLKGAIV…EDAHLLYGFS (63 aa)) is domain I. A domain II region spans residues 64-142 (TKEERTLFGQ…LETSSDEILS (79 aa)). The interval 143 to 153 (ARTAVGDAALN) is flexible linker. Residues 153-202 (NTIASGEEAISALKMLGFADPAIRKAVKSILSEDSSLAVEDIIKRALRML) are domain III.

Belongs to the RuvA family. In terms of assembly, homotetramer. Forms an RuvA(8)-RuvB(12)-Holliday junction (HJ) complex. HJ DNA is sandwiched between 2 RuvA tetramers; dsDNA enters through RuvA and exits via RuvB. An RuvB hexamer assembles on each DNA strand where it exits the tetramer. Each RuvB hexamer is contacted by two RuvA subunits (via domain III) on 2 adjacent RuvB subunits; this complex drives branch migration. In the full resolvosome a probable DNA-RuvA(4)-RuvB(12)-RuvC(2) complex forms which resolves the HJ.

The protein resides in the cytoplasm. Functionally, the RuvA-RuvB-RuvC complex processes Holliday junction (HJ) DNA during genetic recombination and DNA repair, while the RuvA-RuvB complex plays an important role in the rescue of blocked DNA replication forks via replication fork reversal (RFR). RuvA specifically binds to HJ cruciform DNA, conferring on it an open structure. The RuvB hexamer acts as an ATP-dependent pump, pulling dsDNA into and through the RuvAB complex. HJ branch migration allows RuvC to scan DNA until it finds its consensus sequence, where it cleaves and resolves the cruciform DNA. The protein is Holliday junction branch migration complex subunit RuvA of Porphyromonas gingivalis (strain ATCC BAA-308 / W83).